A 137-amino-acid chain; its full sequence is Transcription antitermination protein NusB (137 aa).

This sequence belongs to the NusB family.

Involved in transcription antitermination. Required for transcription of ribosomal RNA (rRNA) genes. Binds specifically to the boxA antiterminator sequence of the ribosomal RNA (rrn) operons. The protein is Transcription antitermination protein NusB of Clavibacter sepedonicus (Clavibacter michiganensis subsp. sepedonicus).